The following is a 235-amino-acid chain: NAD-dependent protein deacylase (235 aa).

The region spanning 1-235 (MDLRLFKNIV…VPRFITQFLE (235 aa)) is the Deacetylase sirtuin-type domain. 14–33 (GAGISAESGIRTFRDQDGLW) provides a ligand contact to NAD(+). Residues tyrosine 58 and arginine 61 each coordinate substrate. 95–98 (QNVD) provides a ligand contact to NAD(+). The active-site Proton acceptor is histidine 113. Residues cysteine 121, cysteine 124, cysteine 140, and cysteine 143 each coordinate Zn(2+). Residues 180-182 (GTS), 204-206 (NLK), and alanine 222 contribute to the NAD(+) site.

This sequence belongs to the sirtuin family. Class III subfamily. Zn(2+) serves as cofactor.

It is found in the cytoplasm. The enzyme catalyses N(6)-acetyl-L-lysyl-[protein] + NAD(+) + H2O = 2''-O-acetyl-ADP-D-ribose + nicotinamide + L-lysyl-[protein]. It catalyses the reaction N(6)-succinyl-L-lysyl-[protein] + NAD(+) + H2O = 2''-O-succinyl-ADP-D-ribose + nicotinamide + L-lysyl-[protein]. In terms of biological role, NAD-dependent lysine deacetylase and desuccinylase that specifically removes acetyl and succinyl groups on target proteins. Modulates the activities of several proteins which are inactive in their acylated form. The chain is NAD-dependent protein deacylase from Bdellovibrio bacteriovorus (strain ATCC 15356 / DSM 50701 / NCIMB 9529 / HD100).